The following is a 452-amino-acid chain: Transcription factor AP-2-delta (452 aa).

Ser-239 carries the post-translational modification Phosphoserine; by PKA. The interval Arg-280–Glu-410 is H-S-H (helix-span-helix), dimerization. The interval Lys-416–Asp-452 is disordered. The segment covering Asn-429–Asp-452 has biased composition (basic and acidic residues).

The protein belongs to the AP-2 family. Binds DNA as a dimer. Can form homodimers or heterodimers with other AP-2 family members. As to expression, expressed in both embryonic and newborn brain.

The protein localises to the nucleus. Functionally, sequence-specific DNA-binding protein that interacts with inducible viral and cellular enhancer elements to regulate transcription of selected genes. AP-2 factors bind to the consensus sequence 5'-GCCNNNGGC-3' and activate genes involved in a large spectrum of important biological functions including proper eye, face, body wall, limb and neural tube development. They also suppress a number of genes including MCAM/MUC18, C/EBP alpha and MYC. This Mus musculus (Mouse) protein is Transcription factor AP-2-delta (Tfap2d).